Consider the following 100-residue polypeptide: Urease subunit gamma (100 aa).

Belongs to the urease gamma subunit family. In terms of assembly, heterotrimer of UreA (gamma), UreB (beta) and UreC (alpha) subunits. Three heterotrimers associate to form the active enzyme.

It is found in the cytoplasm. It catalyses the reaction urea + 2 H2O + H(+) = hydrogencarbonate + 2 NH4(+). Its pathway is nitrogen metabolism; urea degradation; CO(2) and NH(3) from urea (urease route): step 1/1. This is Urease subunit gamma from Rhizobium meliloti (strain 1021) (Ensifer meliloti).